The following is a 161-amino-acid chain: Protein-export protein SecB (161 aa).

A disordered region spans residues 141-161 (KKQQETAGEQPDQPADTITRH).

The protein belongs to the SecB family. In terms of assembly, homotetramer, a dimer of dimers. One homotetramer interacts with 1 SecA dimer.

Its subcellular location is the cytoplasm. In terms of biological role, one of the proteins required for the normal export of preproteins out of the cell cytoplasm. It is a molecular chaperone that binds to a subset of precursor proteins, maintaining them in a translocation-competent state. It also specifically binds to its receptor SecA. This is Protein-export protein SecB from Nitrosomonas europaea (strain ATCC 19718 / CIP 103999 / KCTC 2705 / NBRC 14298).